The primary structure comprises 273 residues: MSILEKITSSPSECAEHLTNKDSCLSKKIQKELTSFLQKKETLGCDSESCVITHPAVKAYAQQKGLDLSKELETRFKAPGPRNNTGLLTNFNIDETLQRWAIKYTKFFNCPFSMMDFERVHYKFNQVDMVKVYKGEELQYVEGKVVKRPCNTFGCVLNTDFSTGTGKHWVAIFVDMRGDCWSIEYFNSAGNSPPGPVIRWMERVKQQLLKIHHTVKTLAVTNIRHQRSQTECGPYSLFYIRARLDNVSYAHFISARITDEDMYKFRTHLFRIA.

Catalysis depends on residues H168 and N187. Residue Q226 coordinates substrate. The active-site Nucleophile is C232.

Belongs to the peptidase C63 family.

The protein localises to the host cytoplasm. The protein resides in the virion. Cysteine protease that plays several role during infection including processing of the structural polyprotein or inhibition of the host immune response. Catalyzes the maturation of the pp220 and pp62 polyprotein precursors into core-shell proteins. Plays a role in the disruption of host pyroptosis via specific cleavage of gasdermin D/GSDMD. In addition, strongly decreases the host cGAS-STING signaling by targeting IKBKE via its enzymatic activity. Also impairs host FOXJ1-mediated antiviral effect via degradation of FOXJ1. The polypeptide is SUMO-1 cysteine protease S273R (Ornithodoros (relapsing fever ticks)).